A 67-amino-acid polypeptide reads, in one-letter code: Large ribosomal subunit protein uL29 (67 aa).

Belongs to the universal ribosomal protein uL29 family.

This Halalkalibacterium halodurans (strain ATCC BAA-125 / DSM 18197 / FERM 7344 / JCM 9153 / C-125) (Bacillus halodurans) protein is Large ribosomal subunit protein uL29 (rpmC).